The chain runs to 291 residues: MAFMKTHLLPILGLFMAYYYYSAYEEFRPEMLQGKKVIVTGASKGIGREMAYHLAKMGAHVVVTARSKETLQKVVSHCLELGAASAHYIAGTMEDMTFAEQFVAQAGKLMGGLDMLILNHITNTSLNFFHDDIHHVRKSMEVNFLSYVVLTVAAMPMLKQSNGSIVIVSSVAGKVAYPMISAYSASKFALYGFFSSIRKEYLMSEVNVSITLCVLGLIDTDTAMKAVSGIIKMQAARKEECALEIIKGGVLRQEEVYYDRSLWTTLLLRNPSRKILEFLRSTSYSTDGLIN.

Residues 1-7 (MAFMKTH) are Cytoplasmic-facing. The chain crosses the membrane as a helical; Signal-anchor for type II membrane protein span at residues 8–24 (LLPILGLFMAYYYYSAY). The Lumenal portion of the chain corresponds to 25–291 (EEFRPEMLQG…TSYSTDGLIN (267 aa)). NADP(+) is bound by residues 41–67 (GASK…TARS), 92–93 (TM), and 119–121 (NHI). N-linked (GlcNAc...) asparagine glycans are attached at residues Asn-123 and Asn-162. Ser-170 contributes to the substrate binding site. Tyr-183 functions as the Proton acceptor in the catalytic mechanism. 183–187 (YSASK) contacts NADP(+). Asn-207 carries N-linked (GlcNAc...) asparagine glycosylation. 218–222 (IDTDT) contacts NADP(+).

The protein belongs to the short-chain dehydrogenases/reductases (SDR) family. In terms of assembly, homodimer. Abundantly expressed in the liver, followed by fibroblasts, also detected in the brain, lung, heart, and ovary, and in smaller amounts in kidney, skin, and spleen.

The protein resides in the endoplasmic reticulum membrane. It carries out the reaction an 11beta-hydroxysteroid + NADP(+) = an 11-oxosteroid + NADPH + H(+). It catalyses the reaction cortisone + NADPH + H(+) = cortisol + NADP(+). The catalysed reaction is corticosterone + NADP(+) = 11-dehydrocorticosterone + NADPH + H(+). The enzyme catalyses a 7beta-hydroxysteroid + NADP(+) = a 7-oxosteroid + NADPH + H(+). It carries out the reaction 7-oxocholesterol + NADPH + H(+) = 7beta-hydroxycholesterol + NADP(+). It catalyses the reaction chenodeoxycholate + NADP(+) = 7-oxolithocholate + NADPH + H(+). The catalysed reaction is 7-oxolithocholate + NADPH + H(+) = ursodeoxycholate + NADP(+). The enzyme catalyses glycochenodeoxycholate + NADP(+) = 7-oxoglycolithocholate + NADPH + H(+). It carries out the reaction taurochenodeoxycholate + NADP(+) = 7-oxotaurolithocholate + NADPH + H(+). It catalyses the reaction tauroursodeoxycholate + NADP(+) = 7-oxotaurolithocholate + NADPH + H(+). The catalysed reaction is glycoursodeoxycholate + NADP(+) = 7-oxoglycolithocholate + NADPH + H(+). The enzyme catalyses 7-oxopregnenolone + NADPH + H(+) = 7beta-hydroxypregnenolone + NADP(+). It carries out the reaction 3beta,7alpha-dihydroxyandrost-5-en-17-one + NADP(+) = 3beta-hydroxy-5-androstene-7,17-dione + NADPH + H(+). It catalyses the reaction 3beta-hydroxy-5-androstene-7,17-dione + NADPH + H(+) = 3beta,7beta-dihydroxyandrost-5-en-17-one + NADP(+). The catalysed reaction is 3beta-hydroxy-5alpha-androstane-7,17-dione + NADPH + H(+) = 3beta,7beta-dihydroxy-5alpha-androstan-17-one + NADP(+). It participates in steroid metabolism. In terms of biological role, controls the reversible conversion of biologically active glucocorticoids such as cortisone to cortisol, and 11-dehydrocorticosterone to corticosterone in the presence of NADP(H). Participates in the corticosteroid receptor-mediated anti-inflammatory response, as well as metabolic and homeostatic processes. Bidirectional in vitro, predominantly functions as a reductase in vivo, thereby increasing the concentration of active glucocorticoids. It has broad substrate specificity, besides glucocorticoids, it accepts other steroid and sterol substrates. Interconverts 7-oxo- and 7-hydroxy-neurosteroids such as 7-oxopregnenolone and 7beta-hydroxypregnenolone, 7-oxodehydroepiandrosterone (3beta-hydroxy-5-androstene-7,17-dione) and 7beta-hydroxydehydroepiandrosterone (3beta,7beta-dihydroxyandrost-5-en-17-one), among others. Catalyzes the stereo-specific conversion of the major dietary oxysterol, 7-ketocholesterol (7-oxocholesterol), into the more polar 7-beta-hydroxycholesterol metabolite. 7-oxocholesterol is one of the most important oxysterols, it participates in several events such as induction of apoptosis, accumulation in atherosclerotic lesions, lipid peroxidation, and induction of foam cell formation. Mediates the 7-oxo reduction of 7-oxolithocholate mainly to chenodeoxycholate, and to a lesser extent to ursodeoxycholate, both in its free form and when conjugated to glycine or taurine, providing a link between glucocorticoid activation and bile acid metabolism. Catalyzes the synthesis of 7-beta-25-dihydroxycholesterol from 7-oxo-25-hydroxycholesterol in vitro, which acts as a ligand for the G-protein-coupled receptor (GPCR) Epstein-Barr virus-induced gene 2 (EBI2) and may thereby regulate immune cell migration. The sequence is that of 11-beta-hydroxysteroid dehydrogenase 1 (HSD11B1) from Saimiri sciureus (Common squirrel monkey).